A 266-amino-acid chain; its full sequence is Anamorsin homolog (266 aa).

The segment at 1–164 is N-terminal SAM-like domain; the sequence is MIINFVGNTL…NITAENPDFL (164 aa). Positions 165 to 185 are linker; it reads SNEDNDVSSDDEDLYNNEDDK. [4Fe-4S] cluster is bound by residues Cys-229, Cys-232, Cys-240, and Cys-243. 2 short sequence motifs (cx2C motif) span residues 229–232 and 240–243; these read CGNC and CASC. The tract at residues 229 to 243 is fe-S binding site B; it reads CGNCYLGDAFRCASC.

This sequence belongs to the anamorsin family. In terms of assembly, monomer. [4Fe-4S] cluster serves as cofactor.

Its subcellular location is the cytoplasm. It is found in the mitochondrion intermembrane space. In terms of biological role, component of the cytosolic iron-sulfur (Fe-S) protein assembly (CIA) machinery. Required for the maturation of extramitochondrial Fe-S proteins. Part of an electron transfer chain functioning in an early step of cytosolic Fe-S biogenesis, facilitating the de novo assembly of a [4Fe-4S] cluster on the cytosolic Fe-S scaffold complex. Electrons are transferred from NADPH via a FAD- and FMN-containing diflavin oxidoreductase. Together with the diflavin oxidoreductase, also required for the assembly of the diferric tyrosyl radical cofactor of ribonucleotide reductase (RNR), probably by providing electrons for reduction during radical cofactor maturation in the catalytic small subunit. The protein is Anamorsin homolog of Plasmodium falciparum (isolate 3D7).